A 204-amino-acid polypeptide reads, in one-letter code: Holliday junction branch migration complex subunit RuvA (204 aa).

The tract at residues 1-64 (MFAFLRGELV…EDLQQLFGFL (64 aa)) is domain I. Residues 65 to 143 (DEEELQLFRL…KIQPTSSAKA (79 aa)) are domain II. A flexible linker region spans residues 144-151 (GAPSAVLS). The domain III stretch occupies residues 151-204 (SATQLIDDAVAALTTLGFPKASAQKAVSKVLETTPGLSVEELVRTSLAAMHNNL).

The protein belongs to the RuvA family. As to quaternary structure, homotetramer. Forms an RuvA(8)-RuvB(12)-Holliday junction (HJ) complex. HJ DNA is sandwiched between 2 RuvA tetramers; dsDNA enters through RuvA and exits via RuvB. An RuvB hexamer assembles on each DNA strand where it exits the tetramer. Each RuvB hexamer is contacted by two RuvA subunits (via domain III) on 2 adjacent RuvB subunits; this complex drives branch migration. In the full resolvosome a probable DNA-RuvA(4)-RuvB(12)-RuvC(2) complex forms which resolves the HJ.

The protein resides in the cytoplasm. In terms of biological role, the RuvA-RuvB-RuvC complex processes Holliday junction (HJ) DNA during genetic recombination and DNA repair, while the RuvA-RuvB complex plays an important role in the rescue of blocked DNA replication forks via replication fork reversal (RFR). RuvA specifically binds to HJ cruciform DNA, conferring on it an open structure. The RuvB hexamer acts as an ATP-dependent pump, pulling dsDNA into and through the RuvAB complex. HJ branch migration allows RuvC to scan DNA until it finds its consensus sequence, where it cleaves and resolves the cruciform DNA. The chain is Holliday junction branch migration complex subunit RuvA from Chlorobaculum parvum (strain DSM 263 / NCIMB 8327) (Chlorobium vibrioforme subsp. thiosulfatophilum).